The following is a 491-amino-acid chain: Delayed-rectifier potassium channel regulatory subunit KCNS3 (491 aa).

Residues 1 to 182 (MVFGEFFHRP…IRMENPAYCL (182 aa)) are Cytoplasmic-facing. A helical membrane pass occupies residues 183–204 (SAKLIAISSLSVVLASIVAMCV). Topologically, residues 205 to 220 (HSMSEFQNEDGEVDDP) are extracellular. The helical transmembrane segment at 221–243 (VLEGVEIACIAWFTGELAIRLVA) threads the bilayer. Topologically, residues 244 to 254 (APSQKKFWKNP) are cytoplasmic. The chain crosses the membrane as a helical span at residues 255 to 275 (LNIIDFVSIIPFYATLAVDTK). Residues 276 to 285 (EEESEDIENM) are Extracellular-facing. Residues 286–306 (GKVVQILRLMRIFRILKLARH) form a helical; Voltage-sensor membrane-spanning segment. At 307-321 (SVGLRSLGATLRHSY) the chain is on the cytoplasmic side. Residues 322–343 (HEVGLLLLFLSVGISIFSVLIY) form a helical membrane-spanning segment. The Extracellular segment spans residues 344–357 (SVEKDEHKSSLTSI). The segment at residues 358-369 (PICWWWATISMT) is an intramembrane region (helical). Positions 370-375 (TVGYGD) match the Selectivity filter motif. The stretch at 370–377 (TVGYGDTH) is an intramembrane region. The Extracellular segment spans residues 378-384 (PVTLAGK). Residues 385 to 413 (IIASTCIICGILVVALPITIIFNKFSKYY) form a helical membrane-spanning segment. Over 414-491 (QKQKDMEVDQ…TASLENCTGK (78 aa)) the chain is Cytoplasmic.

The protein belongs to the potassium channel family. S (TC 1.A.1.2) subfamily. Kv9.3/KCNS3 sub-subfamily. As to quaternary structure, heterotetramer with KCNB1. Does not form homomultimers.

Its subcellular location is the cell membrane. In terms of biological role, potassium channel regulatory subunit that modulates the delayed rectifier potassium channel activity of KCNB1 by namely slowing down the deactivation and inactivation time constants. While it does not form functional channel on its own, it can form functional heterotetrameric channels with KCNB1. The chain is Delayed-rectifier potassium channel regulatory subunit KCNS3 from Mus musculus (Mouse).